A 369-amino-acid polypeptide reads, in one-letter code: Maltose/maltodextrin import ATP-binding protein MalK (369 aa).

In terms of domain architecture, ABC transporter spans 4–234 (VQLRNVTKAW…PADRFVAGFI (231 aa)). 36 to 43 (GPSGCGKS) is a binding site for ATP.

This sequence belongs to the ABC transporter superfamily. Maltooligosaccharide importer (TC 3.A.1.1.1) family. In terms of assembly, the complex is composed of two ATP-binding proteins (MalK), two transmembrane proteins (MalG and MalK) and a solute-binding protein (MalE).

The protein resides in the cell inner membrane. The catalysed reaction is D-maltose(out) + ATP + H2O = D-maltose(in) + ADP + phosphate + H(+). Its function is as follows. Part of the ABC transporter complex MalEFGK involved in maltose/maltodextrin import. Responsible for energy coupling to the transport system. The chain is Maltose/maltodextrin import ATP-binding protein MalK from Salmonella paratyphi A (strain ATCC 9150 / SARB42).